We begin with the raw amino-acid sequence, 102 residues long: Phosphoribosyl-ATP pyrophosphatase (102 aa).

The protein belongs to the PRA-PH family.

It is found in the cytoplasm. The catalysed reaction is 1-(5-phospho-beta-D-ribosyl)-ATP + H2O = 1-(5-phospho-beta-D-ribosyl)-5'-AMP + diphosphate + H(+). It functions in the pathway amino-acid biosynthesis; L-histidine biosynthesis; L-histidine from 5-phospho-alpha-D-ribose 1-diphosphate: step 2/9. The protein is Phosphoribosyl-ATP pyrophosphatase of Jannaschia sp. (strain CCS1).